The primary structure comprises 495 residues: Probable cytosol aminopeptidase (495 aa).

Mn(2+) contacts are provided by Lys-264 and Asp-269. Lys-276 is a catalytic residue. Residues Asp-287, Asp-346, and Glu-348 each coordinate Mn(2+). Residue Arg-350 is part of the active site.

The protein belongs to the peptidase M17 family. It depends on Mn(2+) as a cofactor.

The protein resides in the cytoplasm. The enzyme catalyses Release of an N-terminal amino acid, Xaa-|-Yaa-, in which Xaa is preferably Leu, but may be other amino acids including Pro although not Arg or Lys, and Yaa may be Pro. Amino acid amides and methyl esters are also readily hydrolyzed, but rates on arylamides are exceedingly low.. It catalyses the reaction Release of an N-terminal amino acid, preferentially leucine, but not glutamic or aspartic acids.. Functionally, presumably involved in the processing and regular turnover of intracellular proteins. Catalyzes the removal of unsubstituted N-terminal amino acids from various peptides. The polypeptide is Probable cytosol aminopeptidase (Geotalea uraniireducens (strain Rf4) (Geobacter uraniireducens)).